A 90-amino-acid polypeptide reads, in one-letter code: MANSKQAKKRIIQAERNRQHNVARRSMMRTFLKKTAYAIEKGDVEAAKENFTKVVPILDKYASKGLIHKNKAARHKSRLSAKIKALATAA.

Belongs to the bacterial ribosomal protein bS20 family.

Its function is as follows. Binds directly to 16S ribosomal RNA. This Francisella tularensis subsp. holarctica (strain FTNF002-00 / FTA) protein is Small ribosomal subunit protein bS20.